Here is a 269-residue protein sequence, read N- to C-terminus: 3-methyl-2-oxobutanoate hydroxymethyltransferase (269 aa).

Mg(2+)-binding residues include Asp46 and Asp85. Residues 46 to 47, Asp85, and Lys114 each bind 3-methyl-2-oxobutanoate; that span reads DS. Residue Glu116 coordinates Mg(2+). Glu183 functions as the Proton acceptor in the catalytic mechanism.

It belongs to the PanB family. In terms of assembly, homodecamer; pentamer of dimers. Mg(2+) serves as cofactor.

The protein localises to the cytoplasm. The catalysed reaction is 3-methyl-2-oxobutanoate + (6R)-5,10-methylene-5,6,7,8-tetrahydrofolate + H2O = 2-dehydropantoate + (6S)-5,6,7,8-tetrahydrofolate. Its pathway is cofactor biosynthesis; (R)-pantothenate biosynthesis; (R)-pantoate from 3-methyl-2-oxobutanoate: step 1/2. Catalyzes the reversible reaction in which hydroxymethyl group from 5,10-methylenetetrahydrofolate is transferred onto alpha-ketoisovalerate to form ketopantoate. The protein is 3-methyl-2-oxobutanoate hydroxymethyltransferase of Methylococcus capsulatus (strain ATCC 33009 / NCIMB 11132 / Bath).